Reading from the N-terminus, the 92-residue chain is MARSLKKGPFADDHLLKKVDDLNKTGSKTVIKTWSRRSTIFPQMVSHTIAVHDGRRHVPVYVTEDMVGHKLGEFVATRTFRGHGKDEKKSRK.

It belongs to the universal ribosomal protein uS19 family.

Functionally, protein S19 forms a complex with S13 that binds strongly to the 16S ribosomal RNA. This Lachnoclostridium phytofermentans (strain ATCC 700394 / DSM 18823 / ISDg) (Clostridium phytofermentans) protein is Small ribosomal subunit protein uS19.